The primary structure comprises 1235 residues: ATP-dependent DNA helicase mph1 (1235 aa).

Disordered stretches follow at residues 20–78 and 96–148; these read LTQA…YRIH and DEMP…VHSP. Over residues 61–72 the composition is skewed to basic and acidic residues; that stretch reads SRSDNDEADEKK. Polar residues predominate over residues 137 to 148; it reads AKTQKQNIVHSP. In terms of domain architecture, Helicase ATP-binding spans 272–440; sequence IVHKGLFNNL…EVIDNLEIAE (169 aa). 285 to 292 provides a ligand contact to ATP; sequence LPTGLGKT. Positions 388–391 match the DEAH box motif; the sequence is DEAH. The region spanning 608 to 784 is the Helicase C-terminal domain; that stretch reads KLTYLCDTVL…GSRFTFRHDL (177 aa). Disordered stretches follow at residues 808-827, 944-1117, and 1144-1235; these read NTQD…RKKL, SRLQ…PPLM, and TGAK…DSDE. Residues 947-958 show a composition bias toward basic and acidic residues; sequence QRPEDRDNKPYG. The span at 1015–1027 shows a compositional bias: basic residues; sequence VAPKKAKPRRGRA. Positions 1065–1074 are enriched in basic and acidic residues; that stretch reads PGERVDRTSD. Residues 1075–1085 show a composition bias toward acidic residues; sequence MEELEADDDSD. Composition is skewed to polar residues over residues 1095–1114 and 1146–1159; these read PTQT…SSSP and AKNS…MTQE. Residues 1160–1170 show a composition bias toward low complexity; the sequence is SSDGGDSMDSD. Residues 1194-1209 show a composition bias toward polar residues; sequence PSSSVFSSGQKATPNM.

The protein belongs to the DEAD box helicase family. DEAH subfamily. FANCM sub-subfamily. As to quaternary structure, interacts with the MHF histone-fold complex to form the FANCM-MHF complex.

Its subcellular location is the nucleus. The enzyme catalyses ATP + H2O = ADP + phosphate + H(+). Its function is as follows. ATP-dependent DNA helicase involved in DNA damage repair by homologous recombination and in genome maintenance. Capable of unwinding D-loops. Plays a role in limiting crossover recombinants during mitotic DNA double-strand break (DSB) repair. Component of a FANCM-MHF complex which promotes gene conversion at blocked replication forks, probably by reversal of the stalled fork. The sequence is that of ATP-dependent DNA helicase mph1 from Sclerotinia sclerotiorum (strain ATCC 18683 / 1980 / Ss-1) (White mold).